A 369-amino-acid chain; its full sequence is MKLEASCGTATSEVPKPEKKTARDAEPSSETRPQEVEAEPRSGSGPEAEAEPLDFVVATEREFEEVLAISGGIYGGLDYLPSRYHSWLRDPDRTVVLAKRNGGVIALESVNVIDAGETVLVEGLRVAPWERGKGVAGLLQRFCSQLVKRQHPGVKVARLTRDDQLGPRELKKYRLITKQGILLVRFNASALLAGLGARLAALRTSGTFSPLPTEAVSEAGGDVARLLLSPSVQRDVLPGGTIIQDWQPYRPSESNLRLLAAKGLEWRVDSRARPRVLTLCTRPFPIPHGGDGTWRYLNIDAFGSDGAQVQSQLLWHLQRQAPRLVGLNVMCQLFLEPQLWSQLADFCQVGLGLELVKGYTEQYLLEADI.

Residues 1–49 (MKLEASCGTATSEVPKPEKKTARDAEPSSETRPQEVEAEPRSGSGPEAE) are disordered. A compositionally biased stretch (basic and acidic residues) spans 15 to 26 (PKPEKKTARDAE). An N-acetyltransferase domain is found at 53-188 (LDFVVATERE…QGILLVRFNA (136 aa)).

Functionally, probable N-acetyltransferase. Shows only trace activity toward L-His and no N-acetyltransferase activity toward other amino acids. The physiological substrate of this enzyme is unknown. The polypeptide is Probable N-acetyltransferase 16 (NAT16) (Homo sapiens (Human)).